Consider the following 138-residue polypeptide: Transcription antitermination protein NusB (138 aa).

Belongs to the NusB family.

Its function is as follows. Involved in transcription antitermination. Required for transcription of ribosomal RNA (rRNA) genes. Binds specifically to the boxA antiterminator sequence of the ribosomal RNA (rrn) operons. The sequence is that of Transcription antitermination protein NusB from Colwellia psychrerythraea (strain 34H / ATCC BAA-681) (Vibrio psychroerythus).